The sequence spans 379 residues: Glutamate 5-kinase (379 aa).

Lys15 provides a ligand contact to ATP. The substrate site is built by Ser54, Asp144, and Asn156. 176–177 (TD) is a binding site for ATP. The region spanning 282-360 (KGVILVDAGA…GEIERALGYK (79 aa)) is the PUA domain.

The protein belongs to the glutamate 5-kinase family.

The protein localises to the cytoplasm. The enzyme catalyses L-glutamate + ATP = L-glutamyl 5-phosphate + ADP. It participates in amino-acid biosynthesis; L-proline biosynthesis; L-glutamate 5-semialdehyde from L-glutamate: step 1/2. Catalyzes the transfer of a phosphate group to glutamate to form L-glutamate 5-phosphate. This is Glutamate 5-kinase from Anaeromyxobacter dehalogenans (strain 2CP-C).